We begin with the raw amino-acid sequence, 83 residues long: Hainantoxin-III 2 (83 aa).

An N-terminal signal peptide occupies residues 1 to 21 (MKASMYLALAGLVLLFVVGYA). Residues 22-48 (SESEEKEFPRELLSKIFAVDDFKGEER) constitute a propeptide that is removed on maturation. 3 disulfide bridges follow: cysteine 50–cysteine 65, cysteine 57–cysteine 70, and cysteine 64–cysteine 77. Leucine 81 carries the leucine amide modification.

This sequence belongs to the neurotoxin 10 (Hwtx-1) family. 15 (Hntx-3) subfamily. As to quaternary structure, monomer. Expressed by the venom gland.

It localises to the secreted. Its function is as follows. Selective antagonist of neuronal tetrodotoxin (TTX)-sensitive voltage-gated sodium channels (IC(50)=1270 nM on Nav1.1/SCN1A, 270 nM on Nav1.2/SCN2A, 491 nM on Nav1.3/SCN3A and 232 nM on Nav1.7/SCN9A). This toxin suppress Nav1.7 current amplitude without significantly altering the activation, inactivation, and repriming kinetics. Short extreme depolarizations partially activate the toxin-bound channel, indicating voltage-dependent inhibition of this toxin. This toxin increases the deactivation of the Nav1.7 current after extreme depolarizations. The toxin-Nav1.7 complex is gradually dissociated upon prolonged strong depolarizations in a voltage-dependent manner, and the unbound toxin rebinds to Nav1.7 after a long repolarization. Moreover, analysis of chimeric channels showed that the DIIS3-S4 linker is critical for toxin binding to Nav1.7. These data are consistent with this toxin interacting with Nav1.7 site 4 and trapping the domain II voltage sensor in the closed state. In Cyriopagopus hainanus (Chinese bird spider), this protein is Hainantoxin-III 2.